The primary structure comprises 318 residues: L-lactate dehydrogenase (318 aa).

NAD(+) contacts are provided by residues valine 18, aspartate 39, lysine 44, tyrosine 69, and 83-84 (GA). Residues glutamine 86 and arginine 92 each coordinate substrate. NAD(+) is bound by residues serine 105, 122 to 124 (VSN), and serine 147. 124 to 127 (NPVD) serves as a coordination point for substrate. 152 to 155 (DTSR) lines the substrate pocket. The active-site Proton acceptor is histidine 179. Tyrosine 225 is subject to Phosphotyrosine. Threonine 234 provides a ligand contact to substrate.

Belongs to the LDH/MDH superfamily. LDH family. Homotetramer.

Its subcellular location is the cytoplasm. The catalysed reaction is (S)-lactate + NAD(+) = pyruvate + NADH + H(+). It functions in the pathway fermentation; pyruvate fermentation to lactate; (S)-lactate from pyruvate: step 1/1. In terms of biological role, catalyzes the conversion of lactate to pyruvate. The sequence is that of L-lactate dehydrogenase from Clostridium botulinum (strain Loch Maree / Type A3).